A 68-amino-acid polypeptide reads, in one-letter code: Venom peptide 3 (68 aa).

Residues 1–25 form the signal peptide; it reads MTKQSIVIVLFAAIAMMACLQRVTA. AXPX repeat units lie at residues 25-28, 33-36, 37-40, 41-44, and 47-50; these read AEPA, AAPI, AEPY, ANPE, and ASPE. A propeptide spanning residues 26–51 is cleaved from the precursor; it reads EPAPEPIAAPIAEPYANPEAIASPEA. Leu65 is subject to Leucine amide.

Expressed by the venom gland.

The protein localises to the secreted. It is found in the target cell membrane. Its function is as follows. Antimicrobial peptide with strong activity against the fungi B.cinerea (MIC=5 uM) and C.albicans (MIC=33 uM), and no activity against the Gram-negative bacterium E.coli (MIC&gt;200 uM) and the Gram-positive bacterium S.aureus (MIC&gt;200 uM). Shows cytolytic activity against insect cell lines. Has no hemolytic activity against human erythrocytes. In vivo, peptide injection in the vicinity of the head and thorax of lepidopteran larvae induces feeding disorder that lasts one or two days before recovering. This Orancistrocerus drewseni (Solitary wasp) protein is Venom peptide 3.